Reading from the N-terminus, the 622-residue chain is Threonine--tRNA ligase (622 aa).

Residues 1 to 141 (MKTLLIHSDY…SRKITTERKE (141 aa)) are editing domain. A catalytic region spans residues 199-498 (PHVKYIKEKE…TLENKPPALP (300 aa)). Residues Cys291, His343, and His467 each coordinate Zn(2+).

It belongs to the class-II aminoacyl-tRNA synthetase family. As to quaternary structure, homodimer. Zn(2+) is required as a cofactor.

The protein resides in the cytoplasm. The enzyme catalyses tRNA(Thr) + L-threonine + ATP = L-threonyl-tRNA(Thr) + AMP + diphosphate + H(+). Catalyzes the attachment of threonine to tRNA(Thr) in a two-step reaction: L-threonine is first activated by ATP to form Thr-AMP and then transferred to the acceptor end of tRNA(Thr). Also edits incorrectly charged L-seryl-tRNA(Thr). In Methanococcus maripaludis (strain C7 / ATCC BAA-1331), this protein is Threonine--tRNA ligase.